The following is a 940-amino-acid chain: MEGGKLLGVAHPEPANNIDADLRYDLGQSRMQVDGPVVLNRSAELEPSDSMAIDDVPVEASSQPAPAKQSPALMDTIVEVQKQLKRKRASSGPALAAADKDALVAGCCQELEGLLEYYREVSGHRMQFEVGNLSTNAAIGCLLEESSLGLSKLVDEIYEKLKGMEGVSATSVRSSVLLIGQRMMYGQSSPDADVLEDESETALWCWEVRDLKVIPLRMRGPLSTRRTARKKIHERITAIYSTLSVLEAPGAEAQVNDMRKASLKLSKALNLEGIKSLVERATQKSNIERGAKNTGSTAKEPMQEMVKSNNDTGIIENVDDSQLQKNTSTNEKDTQKAQKQVEKELKQKEKEEARMRKQQKKQQEEALREQKRREKEEAEMKKQQRKQEEEAQKEQKRREKEEAETRKQQKKQQEEAEKEQKRREKEAVQLKKQLAIQKQASMMERFFKNKKDSEKLEKPGGKDSGVQTTDPCTTNKEVVPLVTSIIDSSFSQKENWALEDLRRLQISGWQKLSSYNRSSRWGIRNKPKKEAFKELKLQKTSDNMLEEILSPNEDTCHNLSQENEPDKSANDVDMLPAVELQFHGTNHANPLPTRSIKRKLLQFDKSNRPAYYGTWRKKSAVVGPRCPLKMDPDLDYEVDSDDEWEEEDPGESLSDCEKDNDEVMEEDSKITDEESEDSFFVPDGYLSDNEGIQIESLLDDKDEASSSPPDQCAEVEEFRALLRQQKVLNTLTEQALRKSQPLVISNLTHEKAELLTAGDLKGTSKIEQLCLQVLSMRICPGGATIDLPVIDSSSANAEETNQLNVKSSPAAASAIPDTDLAEIVKVIGSCRDGINKLVESLHQKFPNVSKSQLKNKVREISEFVDNRWQVKKEVLSKLGLSSSPASSKKPKSIATYFSKRCLPPEEAILASPELRLKSKTTQNVNGDTDIPRINLLPSSQ.

Disordered stretches follow at residues 317-473, 638-682, and 919-940; these read NVDD…DPCT, VDSD…FFVP, and KTTQNVNGDTDIPRINLLPSSQ. The span at 320–329 shows a compositional bias: polar residues; sequence DSQLQKNTST. Residues 329 to 439 adopt a coiled-coil conformation; sequence TNEKDTQKAQ…LKKQLAIQKQ (111 aa). Positions 330 to 429 are enriched in basic and acidic residues; it reads NEKDTQKAQK…QKRREKEAVQ (100 aa). A compositionally biased stretch (low complexity) spans 430–440; sequence LKKQLAIQKQA. Residues 445–461 are compositionally biased toward basic and acidic residues; it reads RFFKNKKDSEKLEKPGG. Residues 638–650 are compositionally biased toward acidic residues; sequence VDSDDEWEEEDPG.

This sequence belongs to the CHAF1A family. Component of the chromatin assembly factor 1 (CAF-1) complex, composed of FSM (FAS1), FAS2 and MSI1. As to expression, in embryo, expressed in leaf primordia, coleoptile and radicle. In seedlings, expressed in cell division zone of roots, SAM and leaf primordia. Expressed in floral organ primordia.

The protein resides in the nucleus. Functionally, component of the chromatin assembly factor complex (CAF-1) involved in chromatin assembly following DNA replication and DNA repair. Required for several aspects of development, including apical meristem maintenance by regulating the durations of the S- and G2-phases of the cell cycle through its chromatin assembly activity. In Oryza sativa subsp. japonica (Rice), this protein is Chromatin assembly factor 1 subunit FSM (FSM).